A 754-amino-acid polypeptide reads, in one-letter code: 5-methyltetrahydropteroyltriglutamate--homocysteine methyltransferase (754 aa).

5-methyltetrahydropteroyltri-L-glutamate is bound by residues R17–K20 and K117. L-homocysteine is bound by residues I431–S433 and E484. L-methionine contacts are provided by residues I431–S433 and E484. Residues R515–C516 and W561 each bind 5-methyltetrahydropteroyltri-L-glutamate. D599 provides a ligand contact to L-homocysteine. D599 is an L-methionine binding site. E605 is a 5-methyltetrahydropteroyltri-L-glutamate binding site. 3 residues coordinate Zn(2+): H641, C643, and E665. Residue H694 is the Proton donor of the active site. C726 contacts Zn(2+).

The protein belongs to the vitamin-B12 independent methionine synthase family. The cofactor is Zn(2+).

It carries out the reaction 5-methyltetrahydropteroyltri-L-glutamate + L-homocysteine = tetrahydropteroyltri-L-glutamate + L-methionine. The protein operates within amino-acid biosynthesis; L-methionine biosynthesis via de novo pathway; L-methionine from L-homocysteine (MetE route): step 1/1. In terms of biological role, catalyzes the transfer of a methyl group from 5-methyltetrahydrofolate to homocysteine resulting in methionine formation. The chain is 5-methyltetrahydropteroyltriglutamate--homocysteine methyltransferase from Salmonella typhi.